Reading from the N-terminus, the 329-residue chain is Sex comb on midleg-like protein 1 (329 aa).

The disordered stretch occupies residues 136–160 (SYSPTLPVSRRENNSPSNLPRPSFC). Serine 138 and serine 238 each carry phosphoserine. Positions 258-325 (WSVEAVVLFL…YYIDRLKQGK (68 aa)) constitute an SAM domain.

This sequence belongs to the SCM family.

Its subcellular location is the nucleus. Putative Polycomb group (PcG) protein. PcG proteins act by forming multiprotein complexes, which are required to maintain the transcriptionally repressive state of homeotic genes throughout development. May be involved in spermatogenesis during sexual maturation. This chain is Sex comb on midleg-like protein 1 (SCML1), found in Pongo pygmaeus (Bornean orangutan).